We begin with the raw amino-acid sequence, 297 residues long: tRNA pseudouridine synthase B (297 aa).

Aspartate 39 acts as the Nucleophile in catalysis.

Belongs to the pseudouridine synthase TruB family. Type 1 subfamily.

It catalyses the reaction uridine(55) in tRNA = pseudouridine(55) in tRNA. Responsible for synthesis of pseudouridine from uracil-55 in the psi GC loop of transfer RNAs. The sequence is that of tRNA pseudouridine synthase B from Lactobacillus acidophilus (strain ATCC 700396 / NCK56 / N2 / NCFM).